The primary structure comprises 276 residues: 4-hydroxy-tetrahydrodipicolinate reductase (276 aa).

Residue 16–21 (GALGKM) participates in NAD(+) binding. Residue K44 participates in NADP(+) binding. NAD(+) is bound by residues 109–111 (GTT) and 135–138 (APNF). H165 (proton donor/acceptor) is an active-site residue. H166 lines the (S)-2,3,4,5-tetrahydrodipicolinate pocket. K169 serves as the catalytic Proton donor. 175–176 (GT) is a binding site for (S)-2,3,4,5-tetrahydrodipicolinate.

It belongs to the DapB family.

Its subcellular location is the cytoplasm. It carries out the reaction (S)-2,3,4,5-tetrahydrodipicolinate + NAD(+) + H2O = (2S,4S)-4-hydroxy-2,3,4,5-tetrahydrodipicolinate + NADH + H(+). The catalysed reaction is (S)-2,3,4,5-tetrahydrodipicolinate + NADP(+) + H2O = (2S,4S)-4-hydroxy-2,3,4,5-tetrahydrodipicolinate + NADPH + H(+). The protein operates within amino-acid biosynthesis; L-lysine biosynthesis via DAP pathway; (S)-tetrahydrodipicolinate from L-aspartate: step 4/4. Functionally, catalyzes the conversion of 4-hydroxy-tetrahydrodipicolinate (HTPA) to tetrahydrodipicolinate. In Thermosynechococcus vestitus (strain NIES-2133 / IAM M-273 / BP-1), this protein is 4-hydroxy-tetrahydrodipicolinate reductase.